The following is a 130-amino-acid chain: Small ribosomal subunit protein uS9 (130 aa).

The protein belongs to the universal ribosomal protein uS9 family.

The polypeptide is Small ribosomal subunit protein uS9 (Streptococcus pyogenes serotype M1).